The following is a 499-amino-acid chain: Endosomal/lysosomal proton channel TMEM175 (499 aa).

The segment covering 1 to 10 has biased composition (polar residues); sequence MSRLQVQEQA. The disordered stretch occupies residues 1-26; that stretch reads MSRLQVQEQAVDSEGDSSLYRRDEEG. Over 1 to 30 the chain is Cytoplasmic; it reads MSRLQVQEQAVDSEGDSSLYRRDEEGTQSS. A helical transmembrane segment spans residues 31-53; it reads HRMLGFSDALLSIIATVMILPVT. A RxxxFSD motif 1 motif is present at residues 32 to 38; the sequence is RMLGFSD. Topologically, residues 54–74 are lumenal; the sequence is HTEISPEQQFDKSIQKLLATR. The segment at 55 to 60 is short helix H1-1; the sequence is TEISPE. Positions 62–68 are short helix H2-1; sequence QFDKSIQ. Residues 75 to 97 form a helical membrane-spanning segment; it reads IAVYLMTFLIVTVAWAAHTRLFQ. At 98-103 the chain is on the cytoplasmic side; the sequence is VVGKID. A helical membrane pass occupies residues 104–125; that stretch reads DTLALLNLACMMTITLLPYTFS. The Lumenal portion of the chain corresponds to 126–135; that stretch reads LMVTFPDVPL. Residues 136 to 157 form a helical membrane-spanning segment; sequence GIFLFCMCVIAIGSVQAMIVGY. The Cytoplasmic segment spans residues 158-181; it reads AFHFPHLLNPQIQCSTHRALSRRH. The chain crosses the membrane as a helical span at residues 182-202; sequence ILHLVLRGPALCFVAAVFSLF. The Lumenal portion of the chain corresponds to 203-207; that stretch reads FFPLS. A helical transmembrane segment spans residues 208-227; that stretch reads YLLMVTVIFLPHISKATTWC. Residues 228–254 lie on the Cytoplasmic side of the membrane; the sequence is KDKFMGHRESPAHNVEPFSIDLHAPLS. The helical transmembrane segment at 255–279 threads the bilayer; that stretch reads KERVEAFSDGVYAIVATLLILDICE. Positions 257-263 match the RxxxFSD motif 2 motif; it reads RVEAFSD. The Lumenal portion of the chain corresponds to 280 to 306; it reads DNVPDPKDVQQKFSGSLVAALGAYGPQ. Residues 285 to 293 form a short helix H1-2 region; that stretch reads PKDVQQKFS. The tract at residues 295–301 is short helix H2-2; it reads SLVAALG. The helical transmembrane segment at 307 to 329 threads the bilayer; the sequence is FLAYFGSFATVGLLWFAHHSLFL. The Cytoplasmic segment spans residues 330–335; sequence HVRKAT. Residues 336 to 357 traverse the membrane as a helical segment; it reads QTMGLFNILSLAFVGGLPLAYQ. Residues 358 to 372 are Lumenal-facing; it reads QTSAFARQPRDELER. A helical membrane pass occupies residues 373–393; that stretch reads VRVSCAIIFFASIFQFAIWTT. The Cytoplasmic segment spans residues 394–413; the sequence is ALLHQRETLQPAVQFGGQEH. The chain crosses the membrane as a helical span at residues 414 to 437; that stretch reads AFMFAKLALYPCASLLAFAATCLL. At 438 to 439 the chain is on the lumenal side; sequence SR. The helical transmembrane segment at 440–466 threads the bilayer; the sequence is FSTAIFHLMQIAVPFAFLLLRLLVRLA. Over 467 to 499 the chain is Cytoplasmic; it reads LAGLQVLWDLWPERPQQDQGEPETQSQLLPASC.

It belongs to the TMEM175 family. As to quaternary structure, homodimer. Interacts with AKT (AKT1, AKT2 or AKT3); leading to formation of the lysoK(GF) complex, which activates the channel. Interacts with LAMP1; inhibiting the proton channel activity of TMEM175. Interacts with LAMP2; inhibiting the proton channel activity of TMEM175.

It localises to the endosome membrane. The protein resides in the lysosome membrane. It catalyses the reaction H(+)(in) = H(+)(out). It carries out the reaction K(+)(in) = K(+)(out). Its activity is regulated as follows. Active at low pH (under pH 4.6): proton channel activity is activated by luminal side protons. Polyunsaturated fatty acids, such as arachidonic acid, also activate the channel activity. Proton channel activity is directly inhibited by LAMP1 or LAMP2, facilitating lysosomal acidification. Channel activity is activated following interaction with AKT (AKT1, AKT2 or AKT3): interaction promotes activation from closed to an open state. Activation by AKT is independent of AKT serine/threonine-protein kinase activity. In terms of biological role, proton-activated proton channel that catalyzes proton efflux from endosomes and lysosomes to maintain a steady-state pH. Activated at low pH (under pH 4.6) by luminal side protons: selectively mediates lysosomal proton release from lysosomes, eliciting a proton leak that balances V-ATPase activity to maintain pH homeostasis. Regulation of lumenal pH stability is required for autophagosome-lysosome fusion. Also acts as a potassium channel at higher pH, regulating potassium conductance in endosomes and lysosomes. Constitutes the pore-forming subunit of the lysoK(GF) complex, a complex activated by extracellular growth factors. The lysoK(GF) complex is composed of TMEM175 and AKT (AKT1, AKT2 or AKT3), a major target of growth factor receptors: in the complex, TMEM175 channel is opened by conformational changes by AKT, leading to its activation. The lysoK(GF) complex is required to protect neurons against stress-induced damage. The chain is Endosomal/lysosomal proton channel TMEM175 from Rattus norvegicus (Rat).